Consider the following 99-residue polypeptide: Large ribosomal subunit protein bL21 (99 aa).

Belongs to the bacterial ribosomal protein bL21 family. In terms of assembly, part of the 50S ribosomal subunit. Contacts protein L20.

In terms of biological role, this protein binds to 23S rRNA in the presence of protein L20. This chain is Large ribosomal subunit protein bL21, found in Mesomycoplasma hyopneumoniae (strain 232) (Mycoplasma hyopneumoniae).